The chain runs to 244 residues: Cobalt transport protein CbiM (244 aa).

A signal peptide spans Met-1–Ala-20. The next 6 membrane-spanning stretches (helical) occupy residues Lys-31 to Ile-51, Ile-63 to Val-83, Leu-95 to Phe-115, Ala-117 to Val-137, Val-161 to Ala-181, and Ile-201 to Leu-221.

Belongs to the CbiM family. In terms of assembly, forms an energy-coupling factor (ECF) transporter complex composed of an ATP-binding protein (A component, CbiO), a transmembrane protein (T component, CbiQ) and 2 possible substrate-capture proteins (S components, CbiM and CbiN) of unknown stoichimetry.

It is found in the cell membrane. The protein operates within cofactor biosynthesis; adenosylcobalamin biosynthesis. In terms of biological role, part of the energy-coupling factor (ECF) transporter complex CbiMNOQ involved in cobalt import. The polypeptide is Cobalt transport protein CbiM (Thermosediminibacter oceani (strain ATCC BAA-1034 / DSM 16646 / JW/IW-1228P)).